The following is a 498-amino-acid chain: ATP synthase subunit beta, chloroplastic (498 aa).

A Phosphothreonine modification is found at threonine 6. Position 13 is a phosphoserine (serine 13). 172 to 179 provides a ligand contact to ATP; it reads GGAGVGKT.

It belongs to the ATPase alpha/beta chains family. F-type ATPases have 2 components, CF(1) - the catalytic core - and CF(0) - the membrane proton channel. CF(1) has five subunits: alpha(3), beta(3), gamma(1), delta(1), epsilon(1). CF(0) has four main subunits: a(1), b(1), b'(1) and c(9-12).

The protein resides in the plastid. It is found in the chloroplast thylakoid membrane. It carries out the reaction ATP + H2O + 4 H(+)(in) = ADP + phosphate + 5 H(+)(out). Its function is as follows. Produces ATP from ADP in the presence of a proton gradient across the membrane. The catalytic sites are hosted primarily by the beta subunits. In Olimarabidopsis pumila (Dwarf rocket), this protein is ATP synthase subunit beta, chloroplastic.